The chain runs to 436 residues: GTPase Der (436 aa).

2 consecutive EngA-type G domains span residues 4–167 and 176–351; these read PVVA…PKEE and VKFS…DNHS. GTP contacts are provided by residues 10–17, 57–61, 119–122, 182–189, 229–233, and 294–297; these read GRPNVGKS, DTGGI, NKVD, DTAGM, and NKWD. Positions 352–436 constitute a KH-like domain; sequence LRVQSSMLND…PIRVIARKRK (85 aa).

It belongs to the TRAFAC class TrmE-Era-EngA-EngB-Septin-like GTPase superfamily. EngA (Der) GTPase family. Associates with the 50S ribosomal subunit.

GTPase that plays an essential role in the late steps of ribosome biogenesis. This Listeria welshimeri serovar 6b (strain ATCC 35897 / DSM 20650 / CCUG 15529 / CIP 8149 / NCTC 11857 / SLCC 5334 / V8) protein is GTPase Der.